We begin with the raw amino-acid sequence, 309 residues long: UDP-N-acetylenolpyruvoylglucosamine reductase (309 aa).

Positions 34–198 (RVGGPAEVMF…VRARLHARPG (165 aa)) constitute an FAD-binding PCMH-type domain. The active site involves Arg178. Catalysis depends on Ser227, which acts as the Proton donor. Glu297 is a catalytic residue.

It belongs to the MurB family. FAD is required as a cofactor.

Its subcellular location is the cytoplasm. The catalysed reaction is UDP-N-acetyl-alpha-D-muramate + NADP(+) = UDP-N-acetyl-3-O-(1-carboxyvinyl)-alpha-D-glucosamine + NADPH + H(+). It functions in the pathway cell wall biogenesis; peptidoglycan biosynthesis. In terms of biological role, cell wall formation. The sequence is that of UDP-N-acetylenolpyruvoylglucosamine reductase from Acidiphilium cryptum (strain JF-5).